The following is a 240-amino-acid chain: Protein MGARP (240 aa).

Residues 1–40 (MYLRRAVSKTLALPLRAPPNPAPLGKDASLRRMSSNRFPG) lie on the Cytoplasmic side of the membrane. Residues 41–63 (SSGSNMIYYLVVGVTVSAGGYYA) traverse the membrane as a helical; Anchor for type IV membrane protein segment. Over 64–240 (YKTVTSDQAK…VGSEAASAQG (177 aa)) the chain is Mitochondrial intermembrane. The tract at residues 166–240 (RETTEVNPET…VGSEAASAQG (75 aa)) is disordered. Residues 170-181 (EVNPETTPEVTN) are compositionally biased toward low complexity. The span at 191–201 (DNDKDTTKNET) shows a compositional bias: basic and acidic residues. A compositionally biased stretch (acidic residues) spans 202-213 (SDEYAELEEENS). Low complexity predominate over residues 228–240 (EASVGSEAASAQG).

Interacts with RHOT1/Miro-1, TRAK1/OIP106 and TRAK2/GRIF1. Interacts with RHOT2/Miro-2. Expressed in the brain, adrenal gland and corneal endothelium (CE). Expressed in steroid-producing cells of the ovary and testis (at protein level). Expressed in steroid-producing cells of the ovary and testis. Weakly expressed in placenta. Expressed in corneal endothelial cells.

Its subcellular location is the mitochondrion. It is found in the mitochondrion outer membrane. The protein resides in the mitochondrion inner membrane. Its function is as follows. Plays a role in the trafficking of mitochondria along microtubules. Regulates the kinesin-mediated axonal transport of mitochondria to nerve terminals along microtubules during hypoxia. Participates in the translocation of TRAK2/GRIF1 from the cytoplasm to the mitochondrion. Also plays a role in steroidogenesis through maintenance of mitochondrial abundance and morphology. Plays an inhibitory role during neocortex development by regulating mitochondrial morphology, distribution and motility in neocortical neurons. This chain is Protein MGARP (MGARP), found in Homo sapiens (Human).